We begin with the raw amino-acid sequence, 351 residues long: MTIANRILPHAPADHPPVPVPRVGVLLANLGTPDATDYWSMRRYLNEFLSDRRVIDYPIWKWQPLLQLIILSKRPFTSGNNYRSIWNEERDESPLMTITRDQVRKLRAAVETRYGAGNVVVDFCMRYGNPSTRDVLDDMLAQGCERILFLPLYPQYAGATSATANDQFFRALMQVKRQPAARTVPEYFARPSYIEALASSVERVYATLDTRPDVLVASYHGMPKRYHREGDPYHCQCQKTSRLLRERLGWGPDSIDTTFQSVFGTEEWLRPYTVEHVVQLAEAGKKNIAVISPAFSADCIETLEEINGEIREAFEHAGGESFTYVPCLNDDDLHIAALLEVVEENLAGWID.

Positions 220 and 301 each coordinate Fe cation.

The protein belongs to the ferrochelatase family.

It is found in the cytoplasm. The catalysed reaction is heme b + 2 H(+) = protoporphyrin IX + Fe(2+). It participates in porphyrin-containing compound metabolism; protoheme biosynthesis; protoheme from protoporphyrin-IX: step 1/1. Functionally, catalyzes the ferrous insertion into protoporphyrin IX. The sequence is that of Ferrochelatase from Rhodobacter capsulatus (Rhodopseudomonas capsulata).